The sequence spans 191 residues: Peptidyl-tRNA hydrolase (191 aa).

Tyr-17 provides a ligand contact to tRNA. The active-site Proton acceptor is the His-22. TRNA is bound by residues Tyr-68, Asn-70, and Asn-116.

The protein belongs to the PTH family. In terms of assembly, monomer.

It is found in the cytoplasm. It catalyses the reaction an N-acyl-L-alpha-aminoacyl-tRNA + H2O = an N-acyl-L-amino acid + a tRNA + H(+). Hydrolyzes ribosome-free peptidyl-tRNAs (with 1 or more amino acids incorporated), which drop off the ribosome during protein synthesis, or as a result of ribosome stalling. Its function is as follows. Catalyzes the release of premature peptidyl moieties from peptidyl-tRNA molecules trapped in stalled 50S ribosomal subunits, and thus maintains levels of free tRNAs and 50S ribosomes. The chain is Peptidyl-tRNA hydrolase from Francisella tularensis subsp. tularensis (strain FSC 198).